The sequence spans 344 residues: Deoxyhypusine hydroxylase (344 aa).

HEAT-like PBS-type repeat units lie at residues 81-107 (LKHE…VLED) and 115-140 (RHEA…FRDR). Fe cation-binding residues include His-83, Glu-84, His-116, and Glu-117. The disordered stretch occupies residues 169–188 (EKLRASDFSSVDPAPPTAQG). HEAT-like PBS-type repeat units follow at residues 210–240 (KRYR…LAKG), 248–274 (FRHE…ALSN), and 281–308 (VRHE…FLHD). The Fe cation site is built by His-250, Glu-251, His-283, and Glu-284.

Belongs to the deoxyhypusine hydroxylase family. Requires Fe(2+) as cofactor.

Its subcellular location is the cytoplasm. The protein localises to the nucleus. It catalyses the reaction [eIF5A protein]-deoxyhypusine + AH2 + O2 = [eIF5A protein]-hypusine + A + H2O. It participates in protein modification; eIF5A hypusination. Its function is as follows. Catalyzes the hydroxylation of the N(6)-(4-aminobutyl)-L-lysine intermediate to form hypusine, an essential post-translational modification only found in mature eIF-5A factor. In Chaetomium globosum (strain ATCC 6205 / CBS 148.51 / DSM 1962 / NBRC 6347 / NRRL 1970) (Soil fungus), this protein is Deoxyhypusine hydroxylase.